Here is a 209-residue protein sequence, read N- to C-terminus: MSLNQIQRACFCSGGVKKKKKPKYRFGFPMALYFFFEKLNFSYWTSTTVNPNHYVCVLPSEAGQALASVLGGELFLAKSQLVEATAFDLTGQGAEAGDLLVFLRNNGVVLSYSFYFFLLKKRITFFLHGGDKVSSLESFYSNANWLEREISEMFRGSNLLKKESRNLLLDYGSSFNPFLKKFPSTGHAEVVFNSFLKTTAYVQTAGVEL.

The protein belongs to the complex I 30 kDa subunit family. In terms of assembly, complex I is composed of about 30 different subunits.

The protein resides in the mitochondrion inner membrane. The catalysed reaction is a ubiquinone + NADH + 5 H(+)(in) = a ubiquinol + NAD(+) + 4 H(+)(out). Functionally, core subunit of the mitochondrial membrane respiratory chain NADH dehydrogenase (Complex I) that is believed to belong to the minimal assembly required for catalysis. Complex I functions in the transfer of electrons from NADH to the respiratory chain. The immediate electron acceptor for the enzyme is believed to be ubiquinone. The sequence is that of NADH-ubiquinone oxidoreductase subunit 9 (NAD9) from Paramecium tetraurelia.